A 433-amino-acid chain; its full sequence is UPF0597 protein DNO_0106 (433 aa).

Belongs to the UPF0597 family.

This is UPF0597 protein DNO_0106 from Dichelobacter nodosus (strain VCS1703A).